We begin with the raw amino-acid sequence, 231 residues long: ATP-dependent dethiobiotin synthetase BioD 2 (231 aa).

13 to 18 (SVGKTV) serves as a coordination point for ATP. Threonine 17 is a binding site for Mg(2+). The active site involves lysine 38. ATP-binding positions include aspartate 55, 112-115 (EGTG), 172-173 (NR), 201-203 (PYL), and glutamine 208. Positions 55 and 112 each coordinate Mg(2+).

The protein belongs to the dethiobiotin synthetase family. As to quaternary structure, homodimer. The cofactor is Mg(2+).

Its subcellular location is the cytoplasm. It carries out the reaction (7R,8S)-7,8-diammoniononanoate + CO2 + ATP = (4R,5S)-dethiobiotin + ADP + phosphate + 3 H(+). It participates in cofactor biosynthesis; biotin biosynthesis; biotin from 7,8-diaminononanoate: step 1/2. Catalyzes a mechanistically unusual reaction, the ATP-dependent insertion of CO2 between the N7 and N8 nitrogen atoms of 7,8-diaminopelargonic acid (DAPA, also called 7,8-diammoniononanoate) to form a ureido ring. This Salmonella typhi protein is ATP-dependent dethiobiotin synthetase BioD 2.